The sequence spans 479 residues: Ammonium transporter 3 member 2 (479 aa).

Helical transmembrane passes span 34–54 (VAATVVGLQSVPGLVVLYGGV), 59–79 (WAVNSAFMALYAFAAVWICWV), 139–159 (VVYFQCVFAAITLILVAGSLL), 164–184 (FLAWMIFVPLWLTFSYTVGAF), 202–222 (GGYVIHVSAGIAGFTAAYWVG), 237–257 (ILFTLTGAGLLWMGWAGFNGG), 272–292 (NTNICTAMSLIVWTCLDVIFF), 297–317 (VVGAVQGMITGLVCITPAAGV), 321–341 (WAALVMGVLAGSIPWYTMMIL), 355–375 (LGVFHTHGVAGLLGGLLTGLF), and 407–427 (IAGGLFVVAWNVAVTSLICLA).

The protein belongs to the ammonia transporter channel (TC 1.A.11.2) family.

It localises to the membrane. Its function is as follows. Involved in ammonium transport. The protein is Ammonium transporter 3 member 2 (AMT3-2) of Oryza sativa subsp. japonica (Rice).